Consider the following 2877-residue polypeptide: Desmoplakin (2877 aa).

Residues 1-20 form a disordered region; the sequence is MSCNGGSHPRINTLGRMTRA. Positions 1–591 are interaction with PKP1, JUP, PKP2; the sequence is MSCNGGSHPR…DYMKTIEDLE (591 aa). Positions 1–1063 are globular 1; that stretch reads MSCNGGSHPR…ANSENCNKNK (1063 aa). A phosphoserine mark is found at Ser-22 and Ser-62. The residue at position 65 (Tyr-65) is a Phosphotyrosine. Position 70 is a phosphothreonine (Thr-70). Phosphoserine is present on residues Ser-174, Ser-175, and Ser-183. 2 Spectrin repeats span residues 185–278 and 279–382; these read SGWD…HLRQ and LQNI…LKEN. Residues 383–453 form a Spectrin 3a repeat; sequence AAYFQFFEEA…NLVNKSKKIV (71 aa). Residues 465–522 form the SH3 domain; it reads NKPIILRALCDYKQDQKIVHKGDECILKDNNERSKWYVTGPGGVDMLVPSVGLIIPPP. Residues 523–552 form a Spectrin 3b repeat; that stretch reads NPLAVDLSCKIEQYYEAILALWNQLYINMK. 3 Spectrin repeats span residues 553-634, 661-776, and 777-890; these read SLVS…IQLP, VIET…SLCS, and VRAL…DLEK. 4 coiled-coil regions span residues 1034 to 1280, 1313 to 1354, 1395 to 1443, and 1473 to 1926; these read LKLK…AEEN, NARH…YENE, TSGY…QKAS, and KQSL…KLED. The interval 1064-1952 is central fibrous rod domain; sequence FLDQNLQKYQ…QKEIDKLRQR (889 aa). Phosphoserine occurs at positions 1665, 1715, and 2031. Residues 1953-2877 are globular 2; that stretch reads PYGSHRETQT…YSFSSSSIGY (925 aa). The 4.5 X 38 AA tandem repeats (Domain A) stretch occupies residues 1967-2215; it reads TVDSSKLVFD…LLLSVQKRSM (249 aa). Plectin repeat units lie at residues 2016–2052, 2053–2090, 2091–2128, 2129–2166, 2170–2204, 2205–2240, 2258–2295, 2296–2333, 2334–2371, 2372–2409, 2413–2447, 2463–2500, 2514–2551, 2617–2654, 2655–2692, 2731–2768, and 2769–2806; these read QPFLRGAGAIAGASASPKEKYSLVEAKRKKFITPEST, VMLLEAQAATGGIIDPHRNEKLTVDNAIARDLIDFDDR, QQIYTAEKAITGFDDPFSGKTVSVSEAIKKNLIDRETG, MRLLEAQLASGGVVDPVNSVFLPKDVALARGLIDRDLY, NDPRDSQKNFVDPITKKKVSYMQLRERCRIEPHTG, LLLLSVQKRSMSFQGIRQPVTVTELVDSGILRPSTV, KDFLQGSSCIAGIYNETTKQKLGIYEAMKIGLVRPGTA, LELLEAQAATGFIVDPVSNLRLPVEEAYKRGLVGIEFK, EKLLSAERAVTGYNDPETGNIISLFQAMNKELIEKGHG, IRLLEAQIATGGIIDPKESHRLPVDMAYKRGYFNEELS, SDPSDDTKGFFDPNTEENLTYLQLKERCIKDEETG, SQKNTLRKRRVVIVDPETNKEMSVQEAYKKGLIDYETF, TITGSDGSTRVVLVDRKTGSQYDIQDAIDKGLVDRKFF, SDPLEESSPIAAIFDTENLEKISITEGIERGIVDSITG, QRLLEAQACTGGIIHPTTGQKLSLQDAVSQGLIDQDMA, QRFLEFQFLTGGLVDPEVHGRISTEEAIRKGFIDGRAA, and QRLQDISSYAKILTCPKTKLKISYKDAMNRSMVEDITG. Ser-2214, Ser-2216, and Ser-2232 each carry phosphoserine. Positions 2251 to 2453 are 4.5 X 38 AA tandem repeats (Domain B); the sequence is DEVGERIKDF…EETGLCLLPL (203 aa). Residues 2603–2628 form an LRR 15 repeat; sequence ISSVRNLTIRSSSLSDPLEESSPIAA. The segment at 2616-2828 is 4.5 X 38 AA tandem repeats (Domain C); it reads LSDPLEESSP…GLPSPYNMSA (213 aa). 2 positions are modified to phosphoserine: Ser-2817 and Ser-2822. The disordered stretch occupies residues 2817–2877; it reads SKGLPSPYNM…YSFSSSSIGY (61 aa). The residue at position 2824 (Tyr-2824) is a Phosphotyrosine. Phosphoserine occurs at positions 2827 and 2831. Residues 2830–2853 are 6 X 4 AA tandem repeats of G-S-R-[SR]; it reads GSRSGSRSGSRSGSRSGSRSGSRR. The span at 2830–2853 shows a compositional bias: low complexity; it reads GSRSGSRSGSRSGSRSGSRSGSRR. Omega-N-methylarginine is present on residues Arg-2832 and Arg-2853. At Ser-2855 the chain carries Phosphoserine. Thr-2859 carries the phosphothreonine modification. Positions 2862–2877 are enriched in low complexity; that stretch reads SSYSYSYSFSSSSIGY. The residue at position 2874 (Ser-2874) is a Phosphoserine.

It belongs to the plakin or cytolinker family. In terms of assembly, homodimer. Interacts with COL17A1 (via cytoplasmic region). Interacts with DSC2. Interacts with PKP1. Interacts with PKP2. Interacts weakly with TMEM65. In terms of processing, phosphorylation at Ser-2855 increases association with intermediate filament cytokeratin, potentially facilitating interaction between desmosome junctions and intermediate filament architecture. Expressed in cardiomyocytes (at protein level).

The protein resides in the cell junction. Its subcellular location is the desmosome. It localises to the cell membrane. The protein localises to the cytoplasm. Major high molecular weight protein of desmosomes. Regulates profibrotic gene expression in cardiomyocytes via activation of the MAPK14/p38 MAPK signaling cascade and increase in TGFB1 protein abundance. The protein is Desmoplakin of Rattus norvegicus (Rat).